The chain runs to 601 residues: Oligoendopeptidase F homolog (601 aa).

H387 contacts Zn(2+). Residue E388 is part of the active site. Residues H391 and H394 each contribute to the Zn(2+) site.

The protein belongs to the peptidase M3 family. It depends on Zn(2+) as a cofactor.

Functionally, hydrolyzes peptides containing between 7 and 17 amino acids with a rather wide specificity. This Lactococcus lactis subsp. lactis (strain IL1403) (Streptococcus lactis) protein is Oligoendopeptidase F homolog (pepF).